Consider the following 169-residue polypeptide: Hydroperoxy fatty acid reductase gpx1 (169 aa).

The active site involves C41.

This sequence belongs to the glutathione peroxidase family. As to quaternary structure, monomer.

It carries out the reaction a hydroperoxy polyunsaturated fatty acid + NADPH + H(+) = a hydroxy polyunsaturated fatty acid + NADP(+) + H2O. Its activity is regulated as follows. Mercaptosuccinate, pCMB, and nethylmaleimide act as inhibitors of the catalytic activity. Functionally, hydroperoxy fatty acid reductase essential for the removal of lipid hydroperoxides under normal and stress conditions, leading to the protection of membrane integrity. The sequence is that of Hydroperoxy fatty acid reductase gpx1 (gpx1) from Synechocystis sp. (strain ATCC 27184 / PCC 6803 / Kazusa).